Here is a 392-residue protein sequence, read N- to C-terminus: MKKLLKSALLFAAAGSALSLQALPVGNPAEPSLLIDGTMWEGASGDPCDPCATWCDAISIRAGFYGDYVFDRILKVDVNKTISGMAAAPTAASGTASNTTVAADRSNFAYGKHLQDAEWCTNAAYLALNIWDRFDVFCTLGASNGYFKASSDAFNLVGLIGLAGTDFANQRPNVEISQGIVELYTDTAFSWSVGARGALWECGCATLGAEFQYAQSNPKIEMLNVTSSPAQFMIHKPRGYKGTAANFPLPVAAGTATATDTKSATVKYHEWQVGLALSYRLNMLVPYIGVNWSRATFDADTIRIAQPKLASAILNLTTWNPTLLGVATTLDTSNKYADFMQIVSMQINKMKSRKACGIAVGATLIDADKWSITGEARLIDERAAHINAQFRF.

The signal sequence occupies residues 1–22 (MKKLLKSALLFAAAGSALSLQA).

The protein belongs to the chlamydial porin (CP) (TC 1.B.2) family. In terms of assembly, part of a disulfide cross-linked outer membrane complex (COMC) composed of the major outer membrane porin (MOMP), the small cysteine-rich protein (OmcA) and the large cysteine-rich periplasmic protein (OmcB).

Its subcellular location is the cell outer membrane. In terms of biological role, in elementary bodies (EBs, the infectious stage, which is able to survive outside the host cell) provides the structural integrity of the outer envelope through disulfide cross-links with the small cysteine-rich protein and the large cysteine-rich periplasmic protein. It has been described in publications as the Sarkosyl-insoluble COMC (Chlamydia outer membrane complex), and serves as the functional equivalent of peptidoglycan. Its function is as follows. Permits diffusion of specific solutes through the outer membrane. The chain is Major outer membrane porin (ompA) from Chlamydia psittaci (Chlamydophila psittaci).